Reading from the N-terminus, the 828-residue chain is Periplasmic nitrate reductase (828 aa).

The segment at residues 1–31 (MKLSRRSFMKANAVAAAAAAAGLSVPGVARA) is a signal peptide (tat-type signal). Residues 39 to 95 (IKWDKAPCRFCGTGCGVLVGTQQGRVVACQGDPDAPVNRGLNCIKGYFLPKIMYGKD) enclose the 4Fe-4S Mo/W bis-MGD-type domain. [4Fe-4S] cluster is bound by residues cysteine 46, cysteine 49, cysteine 53, and cysteine 81. Mo-bis(molybdopterin guanine dinucleotide) is bound by residues lysine 83, glutamine 150, asparagine 175, cysteine 179, 212 to 219 (WGSNMAEM), 243 to 247 (STYQH), 262 to 264 (QSD), methionine 372, glutamine 376, asparagine 482, 508 to 509 (SD), lysine 531, aspartate 558, and 718 to 727 (TGRVLEHWHT). Residue phenylalanine 794 participates in substrate binding. Mo-bis(molybdopterin guanine dinucleotide)-binding residues include asparagine 802 and lysine 819.

It belongs to the prokaryotic molybdopterin-containing oxidoreductase family. NasA/NapA/NarB subfamily. In terms of assembly, component of the periplasmic nitrate reductase NapAB complex composed of NapA and NapB. It depends on [4Fe-4S] cluster as a cofactor. Mo-bis(molybdopterin guanine dinucleotide) serves as cofactor. Post-translationally, predicted to be exported by the Tat system. The position of the signal peptide cleavage has not been experimentally proven.

The protein resides in the periplasm. The catalysed reaction is 2 Fe(II)-[cytochrome] + nitrate + 2 H(+) = 2 Fe(III)-[cytochrome] + nitrite + H2O. Its function is as follows. Catalytic subunit of the periplasmic nitrate reductase complex NapAB. Receives electrons from NapB and catalyzes the reduction of nitrate to nitrite. This is Periplasmic nitrate reductase from Escherichia coli O127:H6 (strain E2348/69 / EPEC).